We begin with the raw amino-acid sequence, 470 residues long: Ribulose bisphosphate carboxylase large chain (470 aa).

The substrate site is built by Asn118 and Thr168. Catalysis depends on Lys170, which acts as the Proton acceptor. Residue Lys172 coordinates substrate. Lys196, Asp198, and Glu199 together coordinate Mg(2+). The residue at position 196 (Lys196) is an N6-carboxylysine. The Proton acceptor role is filled by His289. Positions 290, 322, and 374 each coordinate substrate. The Interacts with RbcX2 motif lies at 459-465 (EIKFEFD).

Belongs to the RuBisCO large chain family. Type I subfamily. Heterohexadecamer of 8 large chains and 8 small chains; disulfide-linked. The disulfide link is formed within the large subunit homodimers. The cofactor is Mg(2+). In terms of processing, the disulfide bond which can form in the large chain dimeric partners within the hexadecamer appears to be associated with oxidative stress and protein turnover.

Its subcellular location is the carboxysome. The enzyme catalyses 2 (2R)-3-phosphoglycerate + 2 H(+) = D-ribulose 1,5-bisphosphate + CO2 + H2O. The catalysed reaction is D-ribulose 1,5-bisphosphate + O2 = 2-phosphoglycolate + (2R)-3-phosphoglycerate + 2 H(+). Its function is as follows. RuBisCO catalyzes two reactions: the carboxylation of D-ribulose 1,5-bisphosphate, the primary event in carbon dioxide fixation, as well as the oxidative fragmentation of the pentose substrate in the photorespiration process. Both reactions occur simultaneously and in competition at the same active site. This chain is Ribulose bisphosphate carboxylase large chain, found in Picosynechococcus sp. (strain ATCC 27264 / PCC 7002 / PR-6) (Agmenellum quadruplicatum).